The following is a 205-amino-acid chain: Lipoprotein MlpB (205 aa).

Positions 1–17 are cleaved as a signal peptide; sequence MKIINILFCLLLIVLNS. A lipid anchor (N-palmitoyl cysteine) is attached at Cys18. Cys18 carries S-diacylglycerol cysteine lipidation.

This sequence belongs to the Multicopy lipoprotein (Mlp) family.

The protein localises to the cell outer membrane. In terms of biological role, an outer membrane protein that may participate in pathogenesis. Some human Lyme disease patients have antibodies against this protein. The Mlp proteins probably undergo intragenic recombination, generating new alleles. The polypeptide is Lipoprotein MlpB (Borreliella burgdorferi (strain ATCC 35210 / DSM 4680 / CIP 102532 / B31) (Borrelia burgdorferi)).